The chain runs to 234 residues: Glutathione S-transferase U16 (234 aa).

The GST N-terminal domain occupies 5–85 (EEVKLLGVWY…YIDETWNSSA (81 aa)). Glutathione contacts are provided by residues 15–16 (SP), 42–43 (SK), 56–57 (KV), and 69–70 (ES). One can recognise a GST C-terminal domain in the interval 92–219 (HPYDRALARF…APEIEKVAEF (128 aa)).

Belongs to the GST superfamily. Tau family.

The protein resides in the cytoplasm. It localises to the cytosol. It carries out the reaction RX + glutathione = an S-substituted glutathione + a halide anion + H(+). Its function is as follows. May be involved in the conjugation of reduced glutathione to a wide number of exogenous and endogenous hydrophobic electrophiles and have a detoxification role against certain herbicides. The sequence is that of Glutathione S-transferase U16 (GSTU16) from Arabidopsis thaliana (Mouse-ear cress).